The primary structure comprises 157 residues: 2-C-methyl-D-erythritol 2,4-cyclodiphosphate synthase (157 aa).

A divalent metal cation-binding residues include D8 and H10. Residues D8 to H10 and H34 to S35 contribute to the 4-CDP-2-C-methyl-D-erythritol 2-phosphate site. H42 is a binding site for a divalent metal cation. 4-CDP-2-C-methyl-D-erythritol 2-phosphate contacts are provided by residues D56 to G58, F61 to D65, A100 to A106, T132 to E135, and F139.

Belongs to the IspF family. As to quaternary structure, homotrimer. A divalent metal cation serves as cofactor.

It carries out the reaction 4-CDP-2-C-methyl-D-erythritol 2-phosphate = 2-C-methyl-D-erythritol 2,4-cyclic diphosphate + CMP. The protein operates within isoprenoid biosynthesis; isopentenyl diphosphate biosynthesis via DXP pathway; isopentenyl diphosphate from 1-deoxy-D-xylulose 5-phosphate: step 4/6. Functionally, involved in the biosynthesis of isopentenyl diphosphate (IPP) and dimethylallyl diphosphate (DMAPP), two major building blocks of isoprenoid compounds. Catalyzes the conversion of 4-diphosphocytidyl-2-C-methyl-D-erythritol 2-phosphate (CDP-ME2P) to 2-C-methyl-D-erythritol 2,4-cyclodiphosphate (ME-CPP) with a corresponding release of cytidine 5-monophosphate (CMP). This chain is 2-C-methyl-D-erythritol 2,4-cyclodiphosphate synthase, found in Alkaliphilus oremlandii (strain OhILAs) (Clostridium oremlandii (strain OhILAs)).